A 379-amino-acid polypeptide reads, in one-letter code: Homoserine O-succinyltransferase (379 aa).

An AB hydrolase-1 domain is found at 51–360 (NAVLICHALS…DSPYGHDAFL (310 aa)). Residue serine 157 is the Nucleophile of the active site. Arginine 227 provides a ligand contact to substrate. Catalysis depends on residues aspartate 323 and histidine 356. Aspartate 357 contacts substrate.

This sequence belongs to the AB hydrolase superfamily. MetX family. As to quaternary structure, homodimer.

The protein resides in the cytoplasm. The enzyme catalyses L-homoserine + succinyl-CoA = O-succinyl-L-homoserine + CoA. Its pathway is amino-acid biosynthesis; L-methionine biosynthesis via de novo pathway; O-succinyl-L-homoserine from L-homoserine: step 1/1. Functionally, transfers a succinyl group from succinyl-CoA to L-homoserine, forming succinyl-L-homoserine. The protein is Homoserine O-succinyltransferase of Pseudomonas putida (strain GB-1).